Reading from the N-terminus, the 750-residue chain is Photosystem I P700 chlorophyll a apoprotein A1 (750 aa).

The next 8 membrane-spanning stretches (helical) occupy residues 70–93 (IFSA…FHGA), 156–179 (LYCT…FHYH), 195–219 (LNHH…HVSL), 291–309 (IAHH…GHMY), 346–369 (WHAQ…HHMY), 385–411 (LSLF…IFMV), 433–455 (AIIS…LYIH), and 531–549 (FLVH…LILL). [4Fe-4S] cluster contacts are provided by C573 and C582. A run of 2 helical transmembrane segments spans residues 589-610 (HVFL…HFSW) and 664-686 (LSAY…MFLF). Chlorophyll a' is bound at residue H675. 2 residues coordinate chlorophyll a: M683 and Y691. Phylloquinone is bound at residue W692. A helical membrane pass occupies residues 724 to 744 (AVGVTHYLLGGIATTWAFFLA).

The protein belongs to the PsaA/PsaB family. In terms of assembly, the PsaA/B heterodimer binds the P700 chlorophyll special pair and subsequent electron acceptors. PSI consists of a core antenna complex that captures photons, and an electron transfer chain that converts photonic excitation into a charge separation. The eukaryotic PSI reaction center is composed of at least 11 subunits. P700 is a chlorophyll a/chlorophyll a' dimer, A0 is one or more chlorophyll a, A1 is one or both phylloquinones and FX is a shared 4Fe-4S iron-sulfur center. is required as a cofactor.

It is found in the plastid. The protein resides in the chloroplast thylakoid membrane. It catalyses the reaction reduced [plastocyanin] + hnu + oxidized [2Fe-2S]-[ferredoxin] = oxidized [plastocyanin] + reduced [2Fe-2S]-[ferredoxin]. PsaA and PsaB bind P700, the primary electron donor of photosystem I (PSI), as well as the electron acceptors A0, A1 and FX. PSI is a plastocyanin-ferredoxin oxidoreductase, converting photonic excitation into a charge separation, which transfers an electron from the donor P700 chlorophyll pair to the spectroscopically characterized acceptors A0, A1, FX, FA and FB in turn. Oxidized P700 is reduced on the lumenal side of the thylakoid membrane by plastocyanin. The chain is Photosystem I P700 chlorophyll a apoprotein A1 from Lotus japonicus (Lotus corniculatus var. japonicus).